The chain runs to 174 residues: CASP-like protein 4D2 (174 aa).

The Cytoplasmic portion of the chain corresponds to 1 to 14 (MAPPPPSPPPVSLK). The chain crosses the membrane as a helical span at residues 15–35 (VSLLLLRVLTGVFLVIALIIL). Over 36–60 (STNSVTIVSQGSALKFHFKDVYAYR) the chain is Extracellular. A helical membrane pass occupies residues 61–81 (YMLSAAVIGLLYAVIQLFFTI). Topologically, residues 82–150 (SEFATGMKNP…FFSRGYASAS (69 aa)) are cytoplasmic. A helical transmembrane segment spans residues 151 to 171 (LLLFSFICLAVLSVFSSLAIA). Residues 172–174 (KRN) are Extracellular-facing.

The protein belongs to the Casparian strip membrane proteins (CASP) family. As to quaternary structure, homodimer and heterodimers.

It localises to the cell membrane. The protein is CASP-like protein 4D2 of Arabidopsis lyrata subsp. lyrata (Lyre-leaved rock-cress).